Here is a 1138-residue protein sequence, read N- to C-terminus: Myelin regulatory factor (1138 aa).

Topologically, residues 1–768 are cytoplasmic; the sequence is MEVVDETEAL…CISQRFLQGT (768 aa). Disordered regions lie at residues 56-150, 171-200, 246-267, and 279-339; these read TASF…YSPQ, VSSR…HYPV, AELP…NTLN, and PGTV…SDSL. The segment covering 67–88 has biased composition (low complexity); it reads PGSSGLHHLSPPGSGPSPGRHG. Residue Lys123 is modified to N6-acetyllysine. A compositionally biased stretch (pro residues) spans 178–198; that stretch reads PPPPPAHLPGPPPPPPPPPHY. Residues 250–541 constitute a DNA-binding region (NDT80); sequence PHPSKKRKHS…SNPGQFESDS (292 aa). The short motif at 254–257 is the Nuclear localization signal element; that stretch reads KKRK. A compositionally biased stretch (pro residues) spans 286–302; the sequence is PPHPARAPSPPWPPQGP. Positions 329 to 339 are enriched in low complexity; it reads SPGLLQDSDSL. The Nuclear localization signal motif lies at 491–494; it reads KKGK. One can recognise a Peptidase S74 domain in the interval 587–696; the sequence is SDLRAKEHVQ…KLTDNLETRI (110 aa). A coiled-coil region spans residues 680-711; it reads GAVKELCKLTDNLETRIDELERWSHKLAKLRR. Residues 721–733 are compositionally biased toward polar residues; the sequence is SGAFSHAGSQFSR. The disordered stretch occupies residues 721 to 753; sequence SGAFSHAGSQFSRAGSVPHKKRPPKLANKSSPA. Positions 765-1003 are required for interaction with TMEM98; it reads LQGTIIALVV…QGQLDPAPSL (239 aa). Residues 769–789 traverse the membrane as a helical segment; the sequence is IIALVVVMAFSVVSMSTLYVL. At 790-1138 the chain is on the lumenal side; sequence SLRSEEDLVD…YYFHFYRLCD (349 aa). Positions 891-900 are enriched in low complexity; sequence ATDPALGPTL. Disordered regions lie at residues 891-922 and 951-999; these read ATDP…APLP and ASPV…QLDP. Composition is skewed to polar residues over residues 961–974 and 987–999; these read QSKT…NLQS and PAQF…QLDP. Asn1030, Asn1052, and Asn1116 each carry an N-linked (GlcNAc...) asparagine glycan.

This sequence belongs to the MRF family. In terms of assembly, homotrimer. Interacts (via C-terminal region) with TMEM98; the interaction inhibits MYRF self-cleavage. Glycosylated. In terms of processing, follows autocatalytic cleavage via the peptidase S74 domain. Autoprocessing is apparently constitutive and is essential for transcriptional activity. Autocatalytic cleavage is inhibited by interaction with TMEM98. In terms of tissue distribution, specifically expressed by postmitotic oligodendrocytes in the CNS. Not detected in the peripheral nervous system (PNS).

Its subcellular location is the endoplasmic reticulum membrane. It is found in the nucleus. The protein localises to the cytoplasm. Functionally, constitutes a precursor of the transcription factor. Mediates the autocatalytic cleavage that releases the Myelin regulatory factor, N-terminal component that specifically activates transcription of central nervous system (CNS) myelin genes. Its function is as follows. Membrane-bound part that has no transcription factor activity and remains attached to the endoplasmic reticulum membrane following cleavage. Transcription factor that specifically activates expression of myelin genes such as MBP, MOG, MAG, DUSP15 and PLP1 during oligodendrocyte (OL) maturation, thereby playing a central role in oligodendrocyte maturation and CNS myelination. Specifically recognizes and binds DNA sequence 5'-CTGGYAC-3' in the regulatory regions of myelin-specific genes and directly activates their expression. Not only required during oligodendrocyte differentiation but is also required on an ongoing basis for the maintenance of expression of myelin genes and for the maintenance of a mature, viable oligodendrocyte phenotype. This chain is Myelin regulatory factor (Myrf), found in Mus musculus (Mouse).